The primary structure comprises 127 residues: Small ribosomal subunit protein uS11 (127 aa).

This sequence belongs to the universal ribosomal protein uS11 family. In terms of assembly, part of the 30S ribosomal subunit. Interacts with proteins S7 and S18. Binds to IF-3.

Its function is as follows. Located on the platform of the 30S subunit, it bridges several disparate RNA helices of the 16S rRNA. Forms part of the Shine-Dalgarno cleft in the 70S ribosome. This is Small ribosomal subunit protein uS11 from Ruthia magnifica subsp. Calyptogena magnifica.